The primary structure comprises 170 residues: Ribosomal RNA small subunit methyltransferase G (170 aa).

S-adenosyl-L-methionine is bound by residues Gly-70, Leu-75, 120–121 (AE), and Arg-138.

The protein belongs to the methyltransferase superfamily. RNA methyltransferase RsmG family.

The protein resides in the cytoplasm. In terms of biological role, specifically methylates the N7 position of guanine in position 518 of 16S rRNA. This is Ribosomal RNA small subunit methyltransferase G from Mycobacterium ulcerans (strain Agy99).